A 220-amino-acid chain; its full sequence is MMAYLVFLGPPGAGKGTYAKRIQEKTGIPHISTGDIFRDIVKKENDELGKKIKEIMEKGELVPDELVNEVVKRRLSEKDCEKGFILDGYPRTVAQAEFLDSFLESQNKQLTAAVLFDVPEDVVVQRLTSRRICPKCGRIYNMISLPPKEDELCDDCKVKLVQRDDDKEETVRHRYKVYLEKTQPVIDYYGKKGILKRVDGTIGIDNVVAEVLKIIGWSDK.

Gly12–Thr17 serves as a coordination point for ATP. Residues Ser32–Val62 form an NMP region. AMP is bound by residues Thr33, Arg38, Glu60–Val62, Gly88–Arg91, and Gln95. The LID stretch occupies residues Ser129–Asp166. Arg130 is an ATP binding site. Cys133 and Cys136 together coordinate Zn(2+). Position 139-140 (Ile139–Tyr140) interacts with ATP. The Zn(2+) site is built by Cys153 and Cys156. Arg163 and Arg174 together coordinate AMP. Ile202 is an ATP binding site.

Belongs to the adenylate kinase family. In terms of assembly, monomer.

It localises to the cytoplasm. The catalysed reaction is AMP + ATP = 2 ADP. It participates in purine metabolism; AMP biosynthesis via salvage pathway; AMP from ADP: step 1/1. Its function is as follows. Catalyzes the reversible transfer of the terminal phosphate group between ATP and AMP. Plays an important role in cellular energy homeostasis and in adenine nucleotide metabolism. This is Adenylate kinase from Thermotoga neapolitana.